Reading from the N-terminus, the 199-residue chain is Guanylate kinase (199 aa).

The region spanning 19–198 (VTVAVVSGPT…AVAHLVELLS (180 aa)) is the Guanylate kinase-like domain. Residue 26-33 (GPTAVGKG) coordinates ATP.

Belongs to the guanylate kinase family.

Its subcellular location is the cytoplasm. It carries out the reaction GMP + ATP = GDP + ADP. Its function is as follows. Essential for recycling GMP and indirectly, cGMP. The chain is Guanylate kinase from Cutibacterium acnes (strain DSM 16379 / KPA171202) (Propionibacterium acnes).